The sequence spans 150 residues: UPF0756 membrane protein ECA1265 (150 aa).

4 consecutive transmembrane segments (helical) span residues 1–21, 51–71, 82–102, and 127–147; these read MAYI…GIIS, YGLS…IASG, FLHW…WLGG, and ALFR…SLLI.

The protein belongs to the UPF0756 family.

It localises to the cell membrane. The sequence is that of UPF0756 membrane protein ECA1265 from Pectobacterium atrosepticum (strain SCRI 1043 / ATCC BAA-672) (Erwinia carotovora subsp. atroseptica).